The chain runs to 104 residues: Zinc-containing ferredoxin-2 (104 aa).

The N-terminal extension stretch occupies residues 2–37; sequence GIDPNYRQNRQVVGEHEGHKIYGPVEPPGKLGIHGT. Histidine 17, histidine 20, and histidine 35 together coordinate Zn(2+). 2 4Fe-4S ferredoxin-type domains span residues 38-66 and 75-104; these read IVGVDFDVCIADGSCINACPVNVFQWFDT and KADPINEKACIFCMACVNVCPVAAIDVKPP. Cysteine 46 and cysteine 52 together coordinate [3Fe-4S] cluster. Cysteine 56 lines the [4Fe-4S] cluster pocket. Aspartate 77 provides a ligand contact to Zn(2+). Residues cysteine 84, cysteine 87, and cysteine 90 each coordinate [4Fe-4S] cluster. Cysteine 94 contacts [3Fe-4S] cluster.

The cofactor is [3Fe-4S] cluster. Requires [4Fe-4S] cluster as cofactor. Zn(2+) is required as a cofactor.

In terms of biological role, ferredoxins are iron-sulfur proteins that transfer electrons in a wide variety of metabolic reactions. The sequence is that of Zinc-containing ferredoxin-2 (zfx2) from Sulfurisphaera tokodaii (strain DSM 16993 / JCM 10545 / NBRC 100140 / 7) (Sulfolobus tokodaii).